Reading from the N-terminus, the 226-residue chain is MDWGGLHTILGGVNKHSTSIGKIWLTVLFIFRIMILVVAAKEVWGDEQADFVCNTLQPGCKNVCYDHYFPISHIRLWALQLIFVSTPALLVAMHVAYYRHEKKRKFIRGEIKTEFKDIEEIKKQKVRIEGSLWWTYTGSIFFRVIFEAAFMYVFYVMYDGFAMQRLVKCNAWPCPNTVDCFVSRPTEKTVFTVFMIAVSGICILLNVTELCYLLIRFCSGKSKKPV.

The Cytoplasmic segment spans residues 1–20 (MDWGGLHTILGGVNKHSTSI). Residues 21 to 40 (GKIWLTVLFIFRIMILVVAA) form a helical membrane-spanning segment. Over 41 to 75 (KEVWGDEQADFVCNTLQPGCKNVCYDHYFPISHIR) the chain is Extracellular. Intrachain disulfides connect C53–C180, C60–C174, and C64–C169. Residues 76 to 98 (LWALQLIFVSTPALLVAMHVAYY) traverse the membrane as a helical segment. The Cytoplasmic portion of the chain corresponds to 99-131 (RHEKKRKFIRGEIKTEFKDIEEIKKQKVRIEGS). The chain crosses the membrane as a helical span at residues 132 to 154 (LWWTYTGSIFFRVIFEAAFMYVF). Over 155 to 192 (YVMYDGFAMQRLVKCNAWPCPNTVDCFVSRPTEKTVFT) the chain is Extracellular. The chain crosses the membrane as a helical span at residues 193–215 (VFMIAVSGICILLNVTELCYLLI). Residues 216–226 (RFCSGKSKKPV) are Cytoplasmic-facing.

The protein belongs to the connexin family. A connexon is composed of a hexamer of connexins. Interacts with CNST.

Its subcellular location is the cell membrane. The protein localises to the cell junction. It is found in the gap junction. Its function is as follows. One gap junction consists of a cluster of closely packed pairs of transmembrane channels, the connexons, through which materials of low MW diffuse from one cell to a neighboring cell. The protein is Gap junction beta-2 protein (GJB2) of Bos taurus (Bovine).